The primary structure comprises 882 residues: Alanine--tRNA ligase (882 aa).

4 residues coordinate Zn(2+): His570, His574, Cys672, and His676.

The protein belongs to the class-II aminoacyl-tRNA synthetase family. It depends on Zn(2+) as a cofactor.

The protein resides in the cytoplasm. The catalysed reaction is tRNA(Ala) + L-alanine + ATP = L-alanyl-tRNA(Ala) + AMP + diphosphate. Functionally, catalyzes the attachment of alanine to tRNA(Ala) in a two-step reaction: alanine is first activated by ATP to form Ala-AMP and then transferred to the acceptor end of tRNA(Ala). Also edits incorrectly charged Ser-tRNA(Ala) and Gly-tRNA(Ala) via its editing domain. The polypeptide is Alanine--tRNA ligase (Xanthomonas axonopodis pv. citri (strain 306)).